The primary structure comprises 159 residues: Transcription elongation factor GreA (159 aa).

Residues 5–77 are a coiled coil; that stretch reads REVVLTAQGL…LETMLRKAVI (73 aa).

The protein belongs to the GreA/GreB family.

Its function is as follows. Necessary for efficient RNA polymerase transcription elongation past template-encoded arresting sites. The arresting sites in DNA have the property of trapping a certain fraction of elongating RNA polymerases that pass through, resulting in locked ternary complexes. Cleavage of the nascent transcript by cleavage factors such as GreA or GreB allows the resumption of elongation from the new 3'terminus. GreA releases sequences of 2 to 3 nucleotides. The polypeptide is Transcription elongation factor GreA (Alkaliphilus oremlandii (strain OhILAs) (Clostridium oremlandii (strain OhILAs))).